We begin with the raw amino-acid sequence, 856 residues long: Facilitated trehalose transporter Tret1 (856 aa).

2 disordered regions span residues 1–29 (MSGRDNRGAGGGGGGHQPLSNAMGKLKEK) and 62–202 (DPFL…KATS). The Cytoplasmic segment spans residues 1-389 (MSGRDNRGAG…LEVYRPTTNP (389 aa)). The segment covering 69–80 (VSPQRHPQTVRT) has biased composition (polar residues). A compositionally biased stretch (basic and acidic residues) spans 133-142 (EIREHRDRQQ). The segment covering 170-180 (GNSNTNSNKAA) has biased composition (polar residues). Residues Ser247, Ser248, Ser249, Ser319, and Ser321 each carry the phosphoserine modification. The tract at residues 326–345 (LTSRQHFQQQRSISTDSRKS) is disordered. Residues 329-340 (RQHFQQQRSIST) are compositionally biased toward polar residues. A helical transmembrane segment spans residues 390 to 410 (IFIWTQVIAALSVSLGSLVVG). Residues 411–439 (FVSAYTSPALVSMSDPNITSFTVTKDAGS) are Extracellular-facing. Asn427 carries an N-linked (GlcNAc...) asparagine glycan. A helical transmembrane segment spans residues 440–460 (WVGGIMPLAGLVGGVAGGPLI). At 461-472 (EYMGRRNTILAT) the chain is on the cytoplasmic side. A helical membrane pass occupies residues 473 to 493 (AVPFIVSSLLIACAVNVAMVL). Residues 494-496 (CGR) lie on the Extracellular side of the membrane. A helical transmembrane segment spans residues 497-517 (FLAGFCVGIASLSLPVYLGET). Topologically, residues 518–527 (VQPEVRGTLG) are cytoplasmic. Residues 528-548 (LLPTAFGNIGILVCFVAGSFM) form a helical membrane-spanning segment. Residue Asn549 is glycosylated (N-linked (GlcNAc...) asparagine). Residues 549-551 (NWS) are Extracellular-facing. The helical transmembrane segment at 552–572 (MLAFLGAALPVPFLILMFLIP) threads the bilayer. Residues 573–635 (ETPRWYVSRG…ELLKRNNLKP (63 aa)) are Cytoplasmic-facing. The helical transmembrane segment at 636 to 656 (LSISLGLMFFQQFSGINAVIF) threads the bilayer. Topologically, residues 657-672 (YTVQIFKDAGSTIDGN) are extracellular. Residues 673 to 693 (VCTIIVGVVNFVATFIGILLI) traverse the membrane as a helical segment. Topologically, residues 694 to 699 (DRAGRK) are cytoplasmic. Residues 700 to 720 (ILLYASDIAMVLTLFVLGGFF) traverse the membrane as a helical segment. At 721–739 (YCKAHGPDVSHLGWLPLTC) the chain is on the extracellular side. Residues 740 to 760 (FVVYILGFSVGFGPIPWLMMG) form a helical membrane-spanning segment. Topologically, residues 761 to 766 (EILPAK) are cytoplasmic. Residues 767 to 787 (IRGAAASVATSFNWTCTFVVT) traverse the membrane as a helical segment. Residues 788 to 800 (KTFQDLVGSLGAH) lie on the Extracellular side of the membrane. Residues 801-821 (GAFWLFGAICFVGLFFVILYV) form a helical membrane-spanning segment. Topologically, residues 822–856 (PETQGKTLEDIERKMMGRVRRMSSVANIKPLSFNM) are cytoplasmic. 2 positions are modified to phosphoserine: Ser844 and Ser845.

The protein belongs to the major facilitator superfamily. Sugar transporter (TC 2.A.1.1) family. Trehalose transporter subfamily.

The protein resides in the cell membrane. Low-capacity facilitative transporter for trehalose. Does not transport maltose, sucrose or lactose. Mediates the bidirectional transfer of trehalose. Responsible for the transport of trehalose synthesized in the fat body and the incorporation of trehalose into other tissues that require a carbon source, thereby regulating trehalose levels in the hemolymph. The protein is Facilitated trehalose transporter Tret1 of Drosophila yakuba (Fruit fly).